Here is a 278-residue protein sequence, read N- to C-terminus: Large ribosomal subunit protein uL2 (278 aa).

Disordered stretches follow at residues 1-20 (MAIRKYKPTTPGRRGSSVSD), 25-57 (TRSTPEKSLLRPLTKSGGRNAHGRITTRHRGGG), and 224-278 (VVMN…GKKR). 2 stretches are compositionally biased toward basic residues: residues 45–57 (AHGRITTRHRGGG) and 269–278 (VRRRKTGKKR).

This sequence belongs to the universal ribosomal protein uL2 family. As to quaternary structure, part of the 50S ribosomal subunit. Forms a bridge to the 30S subunit in the 70S ribosome.

One of the primary rRNA binding proteins. Required for association of the 30S and 50S subunits to form the 70S ribosome, for tRNA binding and peptide bond formation. It has been suggested to have peptidyltransferase activity; this is somewhat controversial. Makes several contacts with the 16S rRNA in the 70S ribosome. The polypeptide is Large ribosomal subunit protein uL2 (Nocardia farcinica (strain IFM 10152)).